We begin with the raw amino-acid sequence, 1485 residues long: Putative E3 ubiquitin-protein ligase LIN-2 (1485 aa).

Positions 337–353 (EENEDDSDSELDNESVD) are enriched in acidic residues. Disordered regions lie at residues 337–363 (EENEDDSDSELDNESVDSDDKNNIFSP), 384–450 (NQIP…ISNA), and 462–507 (RKND…KLSM). Low complexity predominate over residues 438–450 (SSPDISIDNISNA). The span at 466–484 (SQTPSMNQDNENSLVLNDS) shows a compositional bias: polar residues. The U-box domain maps to 510–585 (KPPKDFVCPI…TSWKEQNPEL (76 aa)). WD repeat units lie at residues 1194–1232 (SCKEVVELDLSSNGEVLSLHYLNGQVLSGLMDGTSKVCD), 1246–1283 (EHTKAVTSLCSSGDRLYSASLDKTIRVWTIKSDGIKCI), 1409–1448 (SLSTGLDIHRIAINSDFIFAGTKFGTIEVWLKDKFTRVAS), and 1454–1485 (GHTKITSLVSDVDGMMLFVGSSDGKIQVWALD).

The catalysed reaction is S-ubiquitinyl-[E2 ubiquitin-conjugating enzyme]-L-cysteine + [acceptor protein]-L-lysine = [E2 ubiquitin-conjugating enzyme]-L-cysteine + N(6)-ubiquitinyl-[acceptor protein]-L-lysine.. It functions in the pathway protein modification; protein ubiquitination. Putative E3 ubiquitin-protein ligase involved in the rhizobial infection process. Plays an important role in the early steps of infection thread formation and in growth and differentiation of nodules. In Lotus japonicus (Lotus corniculatus var. japonicus), this protein is Putative E3 ubiquitin-protein ligase LIN-2.